A 394-amino-acid polypeptide reads, in one-letter code: NAC domain-containing protein 3 (394 aa).

Residues 3 to 147 (TPVGLRFCPT…TYTLCKVMFN (145 aa)) form the NAC domain. A DNA-binding region spans residues 104–153 (IGEKKILMFYTSKESKSDWVIHEYHGFSHNQMMMTYTLCKVMFNGGMREK). 2 disordered regions span residues 152–173 (EKSS…RRDS) and 264–300 (NSLT…CDSF). Low complexity predominate over residues 155 to 165 (SSSPSSSGVSG). A compositionally biased stretch (polar residues) spans 286-300 (PKTNSIQTSSTCDSF).

Its subcellular location is the nucleus. The chain is NAC domain-containing protein 3 (NAC003) from Arabidopsis thaliana (Mouse-ear cress).